Here is a 187-residue protein sequence, read N- to C-terminus: MKLIVGLGNPELRHAATRHNIGFDVIDHLAGSSTFSSGKGNYRFTKITAPGGPLILVKPMTYMNLSGHAVVAAMNFWKIERENLLVICDDVNIPLGTIRIRAKGSAGGQNGLKHIIQSLGSEEFARLRVGVGGENMPASLSSFVLSKFTAEERKCIDKVIPVCADAVLDFASLGVEHAMTKYNGQVC.

His-14 provides a ligand contact to tRNA. His-19 (proton acceptor) is an active-site residue. Residues Tyr-62, Asn-64, and Asn-110 each coordinate tRNA.

Belongs to the PTH family. Monomer.

It is found in the cytoplasm. It carries out the reaction an N-acyl-L-alpha-aminoacyl-tRNA + H2O = an N-acyl-L-amino acid + a tRNA + H(+). Functionally, hydrolyzes ribosome-free peptidyl-tRNAs (with 1 or more amino acids incorporated), which drop off the ribosome during protein synthesis, or as a result of ribosome stalling. Catalyzes the release of premature peptidyl moieties from peptidyl-tRNA molecules trapped in stalled 50S ribosomal subunits, and thus maintains levels of free tRNAs and 50S ribosomes. The chain is Peptidyl-tRNA hydrolase from Chlorobaculum tepidum (strain ATCC 49652 / DSM 12025 / NBRC 103806 / TLS) (Chlorobium tepidum).